Consider the following 262-residue polypeptide: Putative hydro-lyase cu1581 (262 aa).

The protein belongs to the D-glutamate cyclase family.

The chain is Putative hydro-lyase cu1581 from Corynebacterium urealyticum (strain ATCC 43042 / DSM 7109).